Consider the following 295-residue polypeptide: GTP-binding protein GEM (295 aa).

Residues 39–64 (CNLRNRHSTAPEEHCRRSWSSDSTDS) form a disordered region. GTP is bound by residues 81-88 (GEQGVGKS) and 190-193 (NKSD). The interval 265–284 (ARRFWGKIVAKNNKNMAFKL) is calmodulin-binding.

This sequence belongs to the small GTPase superfamily. RGK family. In terms of assembly, interacts with calmodulin in a Ca(2+)-dependent manner. Calmodulin binding significantly decreases GTP binding. Binds ROCK1. Post-translationally, phosphorylated on tyrosine residues.

Its subcellular location is the cell membrane. Could be a regulatory protein, possibly participating in receptor-mediated signal transduction at the plasma membrane. Has guanine nucleotide-binding activity but undetectable intrinsic GTPase activity. The protein is GTP-binding protein GEM (Gem) of Mus musculus (Mouse).